We begin with the raw amino-acid sequence, 250 residues long: MTVKKLYFIPAGRCMLDHSSVNSALTPGKLLNLPVWCYLLETEEGPILVDTGMPESAVNNEGLFNGTFVEGQILPKMTEEDRIVNILKRVGYEPDDLLYIISSHLHFDHAGGNGAFTNTPIIVQRTEYEAALHREEYMKECILPHLNYKIIEGDYEVVPGVQLLYTPGHSPGHQSLFIETEQSGSVLLTIDASYTKENFEDEVPFAGFDPELALSSIKRLKEVVKKEKPIIFFGHDIEQEKSCRVFPEYI.

Zn(2+) is bound by residues His104, His106, Asp108, His109, His169, Asp191, and His235.

The protein belongs to the metallo-beta-lactamase superfamily. Monomer. The cofactor is Zn(2+).

The enzyme catalyses an N-acyl-L-homoserine lactone + H2O = an N-acyl-L-homoserine + H(+). In terms of biological role, catalyzes hydrolysis of N-hexanoyl-(S)-homoserine lactone, but not the R-enantiomer. Hydrolyzes short- and long-chain N-acyl homoserine lactones with or without 3-oxo substitution at C3, has maximum activity on C10-AHL. In Bacillus thuringiensis subsp. indiana, this protein is N-acyl homoserine lactonase.